The following is a 613-amino-acid chain: 4-hydroxy-3-methylbut-2-en-1-yl diphosphate synthase (flavodoxin) (613 aa).

Residues Cys-514, Cys-517, Cys-548, and Glu-555 each contribute to the [4Fe-4S] cluster site.

The protein belongs to the IspG family. [4Fe-4S] cluster serves as cofactor.

The catalysed reaction is (2E)-4-hydroxy-3-methylbut-2-enyl diphosphate + oxidized [flavodoxin] + H2O + 2 H(+) = 2-C-methyl-D-erythritol 2,4-cyclic diphosphate + reduced [flavodoxin]. It functions in the pathway isoprenoid biosynthesis; isopentenyl diphosphate biosynthesis via DXP pathway; isopentenyl diphosphate from 1-deoxy-D-xylulose 5-phosphate: step 5/6. Converts 2C-methyl-D-erythritol 2,4-cyclodiphosphate (ME-2,4cPP) into 1-hydroxy-2-methyl-2-(E)-butenyl 4-diphosphate. In Chlamydia pneumoniae (Chlamydophila pneumoniae), this protein is 4-hydroxy-3-methylbut-2-en-1-yl diphosphate synthase (flavodoxin).